The sequence spans 93 residues: Small ribosomal subunit protein uS19 (93 aa).

The protein belongs to the universal ribosomal protein uS19 family.

Functionally, protein S19 forms a complex with S13 that binds strongly to the 16S ribosomal RNA. This is Small ribosomal subunit protein uS19 from Helicobacter pylori (strain G27).